Here is a 538-residue protein sequence, read N- to C-terminus: Putative cysteine ligase BshC (538 aa).

The stretch at 460–484 forms a coiled coil; it reads KINEQIELLERMLKRNVEKKHEVEL.

The protein belongs to the BshC family.

Functionally, involved in bacillithiol (BSH) biosynthesis. May catalyze the last step of the pathway, the addition of cysteine to glucosamine malate (GlcN-Mal) to generate BSH. In Bacillus cereus (strain ZK / E33L), this protein is Putative cysteine ligase BshC.